A 136-amino-acid chain; its full sequence is Large-conductance mechanosensitive channel (136 aa).

3 helical membrane passes run 15–35 (IDLA…NSIV), 38–58 (IFMP…MFIQ), and 80–100 (GHFI…FFFV).

Belongs to the MscL family. Homopentamer.

Its subcellular location is the cell inner membrane. In terms of biological role, channel that opens in response to stretch forces in the membrane lipid bilayer. May participate in the regulation of osmotic pressure changes within the cell. The chain is Large-conductance mechanosensitive channel from Bartonella tribocorum (strain CIP 105476 / IBS 506).